Consider the following 148-residue polypeptide: Protein-arginine-phosphatase (148 aa).

Cys9 (nucleophile) is an active-site residue. 10-15 (TGNTCR) is a substrate binding site. The active site involves Arg15. Catalysis depends on Asp117, which acts as the Proton donor.

The protein belongs to the low molecular weight phosphotyrosine protein phosphatase family. In terms of assembly, is present in solution as a mixture of monomers, dimers and higher order oligomers (trimers and tetramers).

The enzyme catalyses N(omega)-phospho-L-arginyl-[protein] + H2O = L-arginyl-[protein] + phosphate. Its activity is regulated as follows. Irreversibly inhibited by the synthetic inhibitor cyc-SeCN-amidine, which inactivates the enzyme by inducing disulfide bond formation between the two active site cysteine residues Cys-9 and Cys-14. Functionally, catalyzes the specific dephosphorylation of phosphoarginine residues in proteins. Probably counteracts the protein arginine kinase McsB in vivo. Exhibits almost no activity against pTyr peptides. Protein arginine phosphorylation has a physiologically important role and is involved in the regulation of many critical cellular processes, such as protein homeostasis, motility, competence, and stringent and stress responses, by regulating gene expression and protein activity. The sequence is that of Protein-arginine-phosphatase (ywle) from Geobacillus stearothermophilus (Bacillus stearothermophilus).